A 132-amino-acid polypeptide reads, in one-letter code: UPF0201 protein MTH_433 (132 aa).

This sequence belongs to the UPF0201 family.

In Methanothermobacter thermautotrophicus (strain ATCC 29096 / DSM 1053 / JCM 10044 / NBRC 100330 / Delta H) (Methanobacterium thermoautotrophicum), this protein is UPF0201 protein MTH_433.